Here is a 233-residue protein sequence, read N- to C-terminus: Large ribosomal subunit protein uL1 (233 aa).

This sequence belongs to the universal ribosomal protein uL1 family. As to quaternary structure, part of the 50S ribosomal subunit.

Binds directly to 23S rRNA. The L1 stalk is quite mobile in the ribosome, and is involved in E site tRNA release. Functionally, protein L1 is also a translational repressor protein, it controls the translation of the L11 operon by binding to its mRNA. This chain is Large ribosomal subunit protein uL1, found in Geobacillus sp. (strain WCH70).